Reading from the N-terminus, the 100-residue chain is Large ribosomal subunit protein uL23 (100 aa).

The protein belongs to the universal ribosomal protein uL23 family. As to quaternary structure, part of the 50S ribosomal subunit. Contacts protein L29, and trigger factor when it is bound to the ribosome.

Functionally, one of the early assembly proteins it binds 23S rRNA. One of the proteins that surrounds the polypeptide exit tunnel on the outside of the ribosome. Forms the main docking site for trigger factor binding to the ribosome. This chain is Large ribosomal subunit protein uL23, found in Mycolicibacterium vanbaalenii (strain DSM 7251 / JCM 13017 / BCRC 16820 / KCTC 9966 / NRRL B-24157 / PYR-1) (Mycobacterium vanbaalenii).